The primary structure comprises 282 residues: Elongation factor Ts (282 aa).

The segment at 80 to 83 (TDFV) is involved in Mg(2+) ion dislocation from EF-Tu.

Belongs to the EF-Ts family.

The protein resides in the cytoplasm. Functionally, associates with the EF-Tu.GDP complex and induces the exchange of GDP to GTP. It remains bound to the aminoacyl-tRNA.EF-Tu.GTP complex up to the GTP hydrolysis stage on the ribosome. This is Elongation factor Ts (tsf) from Chlamydia trachomatis serovar D (strain ATCC VR-885 / DSM 19411 / UW-3/Cx).